Consider the following 134-residue polypeptide: Profilin-2 (134 aa).

An intrachain disulfide couples Cys-13 to Cys-118. An Involved in PIP2 interaction motif is present at residues 84 to 100 (AVIRGKKGSGGITIKKT). Residue Thr-114 is modified to Phosphothreonine.

The protein belongs to the profilin family. In terms of assembly, occurs in many kinds of cells as a complex with monomeric actin in a 1:1 ratio. Post-translationally, phosphorylated by MAP kinases.

It localises to the cytoplasm. The protein localises to the cytoskeleton. In terms of biological role, binds to actin and affects the structure of the cytoskeleton. At high concentrations, profilin prevents the polymerization of actin, whereas it enhances it at low concentrations. This is Profilin-2 from Olea europaea (Common olive).